Consider the following 158-residue polypeptide: 6,7-dimethyl-8-ribityllumazine synthase (158 aa).

5-amino-6-(D-ribitylamino)uracil is bound by residues Phe-23, 61 to 63, and 85 to 87; these read SFE and AVI. Residue 90 to 91 coordinates (2S)-2-hydroxy-3-oxobutyl phosphate; the sequence is DT. His-93 serves as the catalytic Proton donor. Phe-118 is a 5-amino-6-(D-ribitylamino)uracil binding site. Residue Arg-132 coordinates (2S)-2-hydroxy-3-oxobutyl phosphate.

The protein belongs to the DMRL synthase family.

It catalyses the reaction (2S)-2-hydroxy-3-oxobutyl phosphate + 5-amino-6-(D-ribitylamino)uracil = 6,7-dimethyl-8-(1-D-ribityl)lumazine + phosphate + 2 H2O + H(+). It functions in the pathway cofactor biosynthesis; riboflavin biosynthesis; riboflavin from 2-hydroxy-3-oxobutyl phosphate and 5-amino-6-(D-ribitylamino)uracil: step 1/2. Catalyzes the formation of 6,7-dimethyl-8-ribityllumazine by condensation of 5-amino-6-(D-ribitylamino)uracil with 3,4-dihydroxy-2-butanone 4-phosphate. This is the penultimate step in the biosynthesis of riboflavin. The chain is 6,7-dimethyl-8-ribityllumazine synthase from Prochlorococcus marinus (strain NATL1A).